A 225-amino-acid chain; its full sequence is MAGGGAGDPGLGAAAAPAPETREHLFKVLVIGELGVGKTSIIKRYVHQLFSQHYRATIGVDFALKVLNWDSRTLVRLQLWDIAGQERFGNMTRVYYKEAVGAFVVFDISRSSTFEAVLKWKSDLDSKVHLPNGSPIPAVLLANKCDQNKDSSQSPSQVDQFCKEHGFAGWFETSAKDNINIEEAARFLVEKILVNHQSFPNEENDVDKIKLDQETLRAENKSQCC.

Ala2 carries the post-translational modification N-acetylalanine. Residues Val36, Gly37, Lys38, Thr39, Ser40, Ser51, Gln52, Tyr54, and Thr57 each contribute to the GTP site. Thr39 contributes to the Mg(2+) binding site. The Switch 1 motif lies at 48 to 62 (QLFSQHYRATIGVDF). Thr57 is a Mg(2+) binding site. Ser71 bears the Phosphoserine mark. Asp81 lines the Mg(2+) pocket. GTP-binding residues include Gly84, Asn143, Lys144, Asp146, Ala175, and Lys176. A Switch 2 motif is present at residues 84–97 (GQERFGNMTRVYYK). The interval 178 to 197 (NINIEEAARFLVEKILVNHQ) is PKA-RII subunit binding domain. 2 S-geranylgeranyl cysteine lipidation sites follow: Cys224 and Cys225.

Belongs to the small GTPase superfamily. Rab family. In terms of assembly, interacts with ANKRD27. A decreased interaction with ANKRD27 seen in the presence of SGSM2. Interacts with LRRK2 (via N-terminus); this interaction results in stimulation of RAB10 phosphorylation by LRRK2. Mg(2+) serves as cofactor. Widely expressed with high levels in heart, liver, kidney, bone marrow, testis, colon and fetal lung.

Its subcellular location is the mitochondrion. The protein resides in the mitochondrion outer membrane. It localises to the cytoplasmic vesicle. The protein localises to the phagosome. It is found in the phagosome membrane. Its subcellular location is the melanosome. The protein resides in the melanosome membrane. The enzyme catalyses GTP + H2O = GDP + phosphate + H(+). Its activity is regulated as follows. Regulated by guanine the nucleotide exchange factor (GEF) BLOC-3 complex composed of HPS1 and HPS4 which promote the exchange of bound GDP for free GTP. Regulated by the GTPase activating protein (GAP) SGSM2/RUTBC1 which increases the GTP hydrolysis activity. Inhibited by GDP dissociation inhibitors (GDIs) which prevent Rab-GDP dissociation. In terms of biological role, the small GTPases Rab are key regulators of intracellular membrane trafficking, from the formation of transport vesicles to their fusion with membranes. Rabs cycle between an inactive GDP-bound form and an active GTP-bound form that is able to recruit to membranes different set of downstream effectors directly responsible for vesicle formation, movement, tethering and fusion. Also acts as an A-kinase anchoring protein by binding to the type II regulatory subunit of protein kinase A and anchoring it to the mitochondrion. Also involved in synchronization of mitochondrial fission. Plays a role in the maturation of phagosomes that engulf pathogens, such as S.aureus and M.tuberculosis. Plays an important role in the control of melanin production and melanosome biogenesis. In concert with RAB38, regulates the proper trafficking of melanogenic enzymes TYR, TYRP1 and DCT/TYRP2 to melanosomes in melanocytes. Stimulates phosphorylation of RAB10 'Thr-73' by LRRK2. This Homo sapiens (Human) protein is Ras-related protein Rab-32.